The primary structure comprises 131 residues: Holo-[acyl-carrier-protein] synthase (131 aa).

The Mg(2+) site is built by aspartate 8 and glutamate 58.

This sequence belongs to the P-Pant transferase superfamily. AcpS family. Mg(2+) serves as cofactor.

The protein localises to the cytoplasm. It carries out the reaction apo-[ACP] + CoA = holo-[ACP] + adenosine 3',5'-bisphosphate + H(+). Its function is as follows. Transfers the 4'-phosphopantetheine moiety from coenzyme A to a Ser of acyl-carrier-protein. The protein is Holo-[acyl-carrier-protein] synthase of Oenococcus oeni (strain ATCC BAA-331 / PSU-1).